Here is a 159-residue protein sequence, read N- to C-terminus: Phosphopantetheine adenylyltransferase (159 aa).

Threonine 10 is a binding site for substrate. ATP is bound by residues 10-11 (TF) and histidine 18. 3 residues coordinate substrate: lysine 42, methionine 74, and arginine 88. Residues 89–91 (GLR), glutamate 99, and 124–130 (WSFISSS) contribute to the ATP site.

This sequence belongs to the bacterial CoaD family. Homohexamer. The cofactor is Mg(2+).

It localises to the cytoplasm. The enzyme catalyses (R)-4'-phosphopantetheine + ATP + H(+) = 3'-dephospho-CoA + diphosphate. Its pathway is cofactor biosynthesis; coenzyme A biosynthesis; CoA from (R)-pantothenate: step 4/5. Its function is as follows. Reversibly transfers an adenylyl group from ATP to 4'-phosphopantetheine, yielding dephospho-CoA (dPCoA) and pyrophosphate. The protein is Phosphopantetheine adenylyltransferase of Escherichia coli (strain SMS-3-5 / SECEC).